Consider the following 114-residue polypeptide: MADKMQALGAQLTQALQETDEFKALKAAFATMKEDDATYKLFKRFQQIQMDLQQKQMAGQQVTDDEMSRARDVADQVAKIEAVKTLMDAERGVNALLNQLNQTITQPIQDIYAG.

This sequence belongs to the UPF0342 family.

The chain is UPF0342 protein LVIS_1488 from Levilactobacillus brevis (strain ATCC 367 / BCRC 12310 / CIP 105137 / JCM 1170 / LMG 11437 / NCIMB 947 / NCTC 947) (Lactobacillus brevis).